A 299-amino-acid chain; its full sequence is MFRGSIPPLPTPFRRGRLDEEALRRLVERVVQGGSHGVSVGGTTGEPGTQTLEERKRAIEVVLDQVAGRVPVIPGTGALRLEETLELTRFAKEAGAQGAMVIVPYYVKPNQEGLYRYFAEVARTVPDFPLLIYNIPGRAGVEIAPKTVGRLRRDFPNIVGLKHSSKDLEYLSHLFLEAGRDFLVFCGLESLTLPMMSLGAVGTIAATANWLPKEVALLCEKALAGDYQGARELHFHLLEANEAIFWDTNPIPLKTVLSWMGLLEKEWRPPLGPTTPEVEERLRRMAERYGLLPKEKEAA.

Pyruvate is bound at residue threonine 44. The active-site Proton donor/acceptor is the tyrosine 133. The active-site Schiff-base intermediate with substrate is lysine 162. Pyruvate is bound at residue isoleucine 204.

Belongs to the DapA family. In terms of assembly, homotetramer; dimer of dimers.

It localises to the cytoplasm. The enzyme catalyses L-aspartate 4-semialdehyde + pyruvate = (2S,4S)-4-hydroxy-2,3,4,5-tetrahydrodipicolinate + H2O + H(+). It functions in the pathway amino-acid biosynthesis; L-lysine biosynthesis via DAP pathway; (S)-tetrahydrodipicolinate from L-aspartate: step 3/4. Catalyzes the condensation of (S)-aspartate-beta-semialdehyde [(S)-ASA] and pyruvate to 4-hydroxy-tetrahydrodipicolinate (HTPA). The chain is 4-hydroxy-tetrahydrodipicolinate synthase from Thermus thermophilus (strain ATCC 27634 / DSM 579 / HB8).